We begin with the raw amino-acid sequence, 307 residues long: Mitochondrial glycine transporter (307 aa).

3 Solcar repeats span residues 8-87 (PRNS…MRSS), 115-199 (LTMY…SKQL), and 221-305 (TSTT…LVKR). Helical transmembrane passes span 14-39 (LIGG…TRIQ), 62-88 (GTLP…RSSL), 121-146 (LLTG…VRYE), 174-197 (GFGA…EKSK), 225-251 (VNTT…KTRM), and 280-298 (GLSM…AWGI).

This sequence belongs to the mitochondrial carrier (TC 2.A.29) family. SLC25A38 subfamily.

Its subcellular location is the mitochondrion inner membrane. The catalysed reaction is glycine(in) = glycine(out). Functionally, mitochondrial glycine transporter that imports glycine into the mitochondrial matrix. Plays an important role in providing glycine for the first enzymatic step in heme biosynthesis, the condensation of glycine with succinyl-CoA to produce 5-aminolevulinate (ALA) in the mitochondrial matrix. This chain is Mitochondrial glycine transporter, found in Saccharomyces cerevisiae (strain RM11-1a) (Baker's yeast).